A 491-amino-acid chain; its full sequence is Probable glycine dehydrogenase (decarboxylating) subunit 2 (491 aa).

Lysine 264 is modified (N6-(pyridoxal phosphate)lysine).

Belongs to the GcvP family. C-terminal subunit subfamily. The glycine cleavage system is composed of four proteins: P, T, L and H. In this organism, the P 'protein' is a heterodimer of two subunits. It depends on pyridoxal 5'-phosphate as a cofactor.

The catalysed reaction is N(6)-[(R)-lipoyl]-L-lysyl-[glycine-cleavage complex H protein] + glycine + H(+) = N(6)-[(R)-S(8)-aminomethyldihydrolipoyl]-L-lysyl-[glycine-cleavage complex H protein] + CO2. The glycine cleavage system catalyzes the degradation of glycine. The P protein binds the alpha-amino group of glycine through its pyridoxal phosphate cofactor; CO(2) is released and the remaining methylamine moiety is then transferred to the lipoamide cofactor of the H protein. This is Probable glycine dehydrogenase (decarboxylating) subunit 2 from Coxiella burnetii (strain CbuK_Q154) (Coxiella burnetii (strain Q154)).